The primary structure comprises 140 residues: Myrosinase 2 (140 aa).

The active-site Nucleophile is the R70. N114 and N127 each carry an N-linked (GlcNAc...) asparagine glycan.

The protein belongs to the glycosyl hydrolase 1 family. In terms of assembly, homodimer.

The catalysed reaction is a thioglucoside + H2O = a sugar + a thiol.. Inhibited by ascorbate. Functionally, degradation of glucosinolates (glucose residue linked by a thioglucoside bound to an amino acid derivative) to glucose, sulfate and any of the products: thiocyanates, isothiocyanates, nitriles, epithionitriles or oxazolidine-2-thiones. In Brevicoryne brassicae (Mealy cabbage aphid), this protein is Myrosinase 2.